Consider the following 175-residue polypeptide: Protein ppBat (175 aa).

Positions 74 and 111 each coordinate Zn(2+). Riboflavin-binding residues include Asn161 and Trp164.

Homodimer.

Functionally, binds flavin derivatives, such as lumichrome, riboflavin, FMN, and FAD. May act as a flavin storage protein. Appears to lack proteolytic or chaperone activities. The chain is Protein ppBat from Bacteroides thetaiotaomicron (strain ATCC 29148 / DSM 2079 / JCM 5827 / CCUG 10774 / NCTC 10582 / VPI-5482 / E50).